The following is a 64-amino-acid chain: Large ribosomal subunit protein bL35 (64 aa).

This sequence belongs to the bacterial ribosomal protein bL35 family.

This chain is Large ribosomal subunit protein bL35, found in Mycoplasmopsis pulmonis (strain UAB CTIP) (Mycoplasma pulmonis).